The primary structure comprises 59 residues: Large ribosomal subunit protein uL30 (59 aa).

Belongs to the universal ribosomal protein uL30 family. Part of the 50S ribosomal subunit.

In Actinobacillus pleuropneumoniae serotype 7 (strain AP76), this protein is Large ribosomal subunit protein uL30.